Consider the following 132-residue polypeptide: MASPVTTNGKEPLVRKQKKSLSLPHDVLVSCLAHVSRLHYSILSLVLKNFRSLIASPELYKTRSLLGRIESCLYVCLRFPNESHPRWFTLYMKPNQIVANNKSNCNLLVPTPTISSSPAHWLCLIAVGSRIY.

Positions 17–63 constitute an F-box domain; it reads QKKSLSLPHDVLVSCLAHVSRLHYSILSLVLKNFRSLIASPELYKTR.

This chain is Putative F-box protein At4g05620, found in Arabidopsis thaliana (Mouse-ear cress).